The primary structure comprises 331 residues: L-lactate dehydrogenase A chain (331 aa).

NAD(+) is bound by residues 29–57 (GMVG…MEDK) and Arg-98. Residues Arg-105, Asn-137, and Arg-168 each coordinate substrate. Residue Asn-137 participates in NAD(+) binding. The active-site Proton acceptor is the His-192. Thr-247 contributes to the substrate binding site.

Belongs to the LDH/MDH superfamily. LDH family. As to quaternary structure, homotetramer.

It is found in the cytoplasm. The catalysed reaction is (S)-lactate + NAD(+) = pyruvate + NADH + H(+). It functions in the pathway fermentation; pyruvate fermentation to lactate; (S)-lactate from pyruvate: step 1/1. Functionally, interconverts simultaneously and stereospecifically pyruvate and lactate with concomitant interconversion of NADH and NAD(+). In Harpagifer antarcticus (Antarctic spiny plunderfish), this protein is L-lactate dehydrogenase A chain (ldha).